We begin with the raw amino-acid sequence, 983 residues long: UPF0182 protein MLBr00644 (983 aa).

7 helical membrane passes run 19–39 (LIMVALGVIVLLLAGPRLVDA), 63–83 (VVVFLVAGLVVGGIVFAGLAV), 113–133 (LIGVGIPAAIGLLAGIIAQSY), 175–195 (FVAVFLAFVVNLLAHYIFGGI), 210–230 (LQLVSLVGVLVLLKAVAYWLD), 259–279 (KLILIAIALICAAAVFSAITL), and 287–307 (IGLVLLMLSSLIVGTGWPLIV).

This sequence belongs to the UPF0182 family.

Its subcellular location is the cell membrane. This chain is UPF0182 protein MLBr00644, found in Mycobacterium leprae (strain Br4923).